We begin with the raw amino-acid sequence, 442 residues long: Phosphatidylserine synthase 2 (442 aa).

Topologically, residues 1–40 (MRRGERRGPAGPLGDGPALGLRRSTESEVYDDGTNTFFWR) are cytoplasmic. A helical membrane pass occupies residues 41–61 (AHTLTVLFILTCALGYVTLLE). Residues 62–74 (ETPQDTAYNTKRG) lie on the Lumenal side of the membrane. Residues 75 to 95 (IVASILVFLCFGVTQAKDGPF) form a helical membrane-spanning segment. At 96 to 104 (SRPHPAYWR) the chain is on the cytoplasmic side. Residues 105–125 (FWLCVSVVYELFLIFILFQTV) form a helical membrane-spanning segment. Topologically, residues 126 to 291 (QDGRQFMKYI…EWKPASSLRR (166 aa)) are lumenal. N-linked (GlcNAc...) asparagine glycans are attached at residues Asn159 and Asn215. Residues 292–312 (WLAVCGIIFVFLLAELNTFYL) traverse the membrane as a helical segment. Position 313 (Lys313) is a topological domain, cytoplasmic. Residues 314-334 (FVLWMPPEHYLVLLRLVFFVN) form a helical membrane-spanning segment. Over 335 to 354 (VGGVAMREIYDFMDDPKFHK) the chain is Lumenal. Residues 355–375 (KLGQQAWLVAAITATEFLIVV) traverse the membrane as a helical segment. The Cytoplasmic segment spans residues 376–381 (KYDPYT). Residues 382–402 (LTLSLPFYITQCWILGIILVL) form a helical membrane-spanning segment. Over 403-442 (TWTAWRFFIRDITLRYKEIRRQKQEHKYEKDKCLSNGDGH) the chain is Lumenal.

It belongs to the phosphatidyl serine synthase family.

The protein localises to the endoplasmic reticulum membrane. The catalysed reaction is a 1,2-diacyl-sn-glycero-3-phosphoethanolamine + L-serine = a 1,2-diacyl-sn-glycero-3-phospho-L-serine + ethanolamine. The enzyme catalyses 1-hexadecanoyl-2-(9Z-octadecenoyl)-sn-glycero-3-phosphoethanolamine + L-serine = 1-hexadecanoyl-2-(9Z-octadecenoyl)-sn-glycero-3-phospho-L-serine + ethanolamine. It carries out the reaction 1-hexadecanoyl-2-(4Z,7Z,10Z,13Z,16Z,19Z-docosahexaenoyl)-sn-glycero-3-phosphoethanolamine + L-serine = 1-hexadecanoyl-2-(4Z,7Z,10Z,13Z,16Z,19Z-docosahexaenoyl)-sn-glycero-3-phosphoserine + ethanolamine. It catalyses the reaction 1-octadecanoyl-2-(5Z,8Z,11Z,14Z)-eicosatetraenoyl-sn-glycero-3-phosphoethanolamine + L-serine = 1-octadecanoyl-2-(5Z,8Z,11Z,14Z)-eicosatetraenoyl-sn-glycero-3-phosphoserine + ethanolamine. The catalysed reaction is 1-octadecanoyl-2-(4Z,7Z,10Z,13Z,16Z,19Z-docosahexaenoyl)-sn-glycero-3-phosphoethanolamine + L-serine = 1-octadecanoyl-2-(4Z,7Z,10Z,13Z,16Z,19Z-docosahexaenoyl)-sn-glycero-3-phosphoserine + ethanolamine. The enzyme catalyses 1-(1Z-octadecenyl)-2-(4Z,7Z,10Z,13Z,16Z,19Z-docosahexaenoyl)-sn-glycero-3-phosphoethanolamine + L-serine = 1-(1Z-octadecenyl)-2-(4Z,7Z,10Z,13Z,16Z,19Z-docosahexaenoyl)-sn-glycero-3-phospho-L-serine + ethanolamine. It carries out the reaction 1-octadecanoyl-2-(9Z-octadecenoyl)-sn-glycero-3-phosphoethanolamine + L-serine = 1-octadecanoyl-2-(9Z-octadecenoyl)-sn-glycero-3-phospho-L-serine + ethanolamine. It catalyses the reaction 1-(1Z-octadecenyl)-2-(9Z-octadecenoyl)-sn-glycero-3-phosphoethanolamine + L-serine = 1-(1Z-octadecenyl)-2-(9Z-octadecenoyl)-sn-glycero-3-phospho-L-serine + ethanolamine. The catalysed reaction is 1-(1Z-octadecenyl)-2-(5Z,8Z,11Z,14Z- eicosatetraenoyl)-sn-glycero-3-phosphoethanolamine + L-serine = 1-(1Z-octadecenyl)-2-(5Z,8Z,11Z,14Z-eicosatetraenoyl)-sn-glycero-3-phospho-L-serine + ethanolamine. The protein operates within phospholipid metabolism; phosphatidylserine biosynthesis. Its function is as follows. Catalyzes a base-exchange reaction in which the polar head group of phosphatidylethanolamine (PE) or phosphatidylcholine (PC) is replaced by L-serine. Catalyzes the conversion of phosphatatidylethanolamine and does not act on phosphatidylcholine. Can utilize both phosphatidylethanolamine (PE) plasmalogen and diacyl PE as substrate and the latter is six times better utilized, indicating the importance of an ester linkage at the sn-1 position. Although it shows no sn-1 fatty acyl preference, exhibits significant preference towards docosahexaenoic acid (22:6n-3) compared with 18:1 or 20:4 at the sn-2 position. This is Phosphatidylserine synthase 2 (PTDSS1) from Gallus gallus (Chicken).